The primary structure comprises 521 residues: Probable protein phosphatase 2C 16 (521 aa).

The PPM-type phosphatase domain maps to Lys21–Phe327. The Mn(2+) site is built by Asp57, Gly58, Gln276, and Glu318. The interval Ala354–Pro431 is disordered.

Belongs to the PP2C family. Mg(2+) is required as a cofactor. The cofactor is Mn(2+).

The catalysed reaction is O-phospho-L-seryl-[protein] + H2O = L-seryl-[protein] + phosphate. It catalyses the reaction O-phospho-L-threonyl-[protein] + H2O = L-threonyl-[protein] + phosphate. This chain is Probable protein phosphatase 2C 16, found in Oryza sativa subsp. japonica (Rice).